Reading from the N-terminus, the 228-residue chain is MNTLFSPPSPPDNEQQLFECAQLLAGLSMGELAAKANLPIPPNLKRDKGWVGMLLEYYLGASAGSKPEQDFEHIGIELKTIPVDRRGYPLETTFVCVAPLTGNSGITWGSCHVRRKLSRVLWIPVEGEREIPLAKRRVGSPLLWSPNQEEEELLRRDWEELMDFIVLGKVESVTARHGEVLQLRPKAANSKALTEAIGVHGQPIMTLPRGFYLRKNFTAPLLARHFLI.

Belongs to the MutH family.

It localises to the cytoplasm. Sequence-specific endonuclease that cleaves unmethylated GATC sequences. It is involved in DNA mismatch repair. The sequence is that of DNA mismatch repair protein MutH from Photorhabdus laumondii subsp. laumondii (strain DSM 15139 / CIP 105565 / TT01) (Photorhabdus luminescens subsp. laumondii).